Here is a 217-residue protein sequence, read N- to C-terminus: MGQKIHPLGFRLGITQDHRSHWFAKPAQYRQLLQEDNSIRNFLRTKLINAGIARIDIQRKADQVEIEVRTARPGLIVGRSGKGVENLLRDLQEQFKNKRRFRITITYIPEPDLESTLIAEFIAQRLEARAPFRRAMRQAIQRATRAGVEGIKIQVAGRLNGAEIARSEWVREGRVPLQTLRANIDYSYCQAKTIYGILGIKVWMFKGEKFSSKAVTT.

Residues isoleucine 39–proline 109 enclose the KH type-2 domain.

Belongs to the universal ribosomal protein uS3 family. As to quaternary structure, part of the 30S ribosomal subunit.

It localises to the plastid. Its subcellular location is the chloroplast. The chain is Small ribosomal subunit protein uS3c (rps3) from Chlorokybus atmophyticus (Soil alga).